The following is a 1288-amino-acid chain: VWFA and cache domain-containing protein 1 (1288 aa).

The first 49 residues, 1-49 (MAREPEEEETVRPAAVVRRCPRCPGWPGAPRPPLWLLCLVACWILGAVA), serve as a signal peptide directing secretion. Residues 50-1109 (DADFSILDEA…ITLNMIKSAP (1060 aa)) lie on the Extracellular side of the membrane. Asn159 carries an N-linked (GlcNAc...) asparagine glycan. A VWFA domain is found at 242–457 (HIVVILDHGA…TTVGRFYTNL (216 aa)). 2 consecutive Cache domains span residues 467–546 (FSLP…SEPP) and 786–867 (LTGP…HPTL). The helical transmembrane segment at 1110 to 1130 (VGPVAGGIMGCIMVLVLAVYA) threads the bilayer. Over 1131–1288 (YRHQIHRRSH…VTVHTVDAEC (158 aa)) the chain is Cytoplasmic. Disordered stretches follow at residues 1157–1176 (NLEN…RGII) and 1187–1237 (ERHV…VDVG). Basic and acidic residues predominate over residues 1159 to 1174 (ENDRDERDDDSHEDRG). Residues 1210-1229 (GYSTMSPQEDSENPPCNNDP) show a composition bias toward polar residues.

The protein belongs to the calcium channel subunit alpha-2/delta family.

Its subcellular location is the membrane. May regulate voltage-dependent calcium channels. In Mus musculus (Mouse), this protein is VWFA and cache domain-containing protein 1 (Cachd1).